The primary structure comprises 219 residues: MLRAGAPTAGSFRTKEVHTGTTIMAVEFDGGVVVGSDSRVSAGEAVVNRVFDKLSPLHQRIFCALSGSAADAQAIADMAAYQLELHGLELEEPPLVLAAANVVKNISYKYREDLLAHLIVAGWDQREGGQVYGTMGGMLIRQPFTIGGSGSSYIYGYVDAAYKPGMTSEECRRFTTNAITLAMNRDGSSGGVIYLVTITVAGVDHRVILGDELPKFYDE.

Residues 1–20 constitute a propeptide, removed in mature form; the sequence is MLRAGAPTAGSFRTKEVHTG. The Nucleophile role is filled by T21. Residues K53 and K109 each carry the N6-acetyllysine modification.

This sequence belongs to the peptidase T1B family. As to quaternary structure, the 26S proteasome consists of a 20S proteasome core and two 19S regulatory subunits. The 20S proteasome core is composed of 28 subunits that are arranged in four stacked rings, resulting in a barrel-shaped structure. The two end rings are each formed by seven alpha subunits, and the two central rings are each formed by seven beta subunits. The catalytic chamber with the active sites is on the inside of the barrel. Component of the immunoproteasome, where it displaces the equivalent housekeeping subunit PSMB6. Component of the spermatoproteasome, a form of the proteasome specifically found in testis. Autocleaved. The resulting N-terminal Thr residue of the mature subunit is responsible for the nucleophile proteolytic activity.

The protein localises to the cytoplasm. The protein resides in the nucleus. It carries out the reaction Cleavage of peptide bonds with very broad specificity.. The proteasome is a multicatalytic proteinase complex which is characterized by its ability to cleave peptides with Arg, Phe, Tyr, Leu, and Glu adjacent to the leaving group at neutral or slightly basic pH. The proteasome has an ATP-dependent proteolytic activity. This subunit is involved in antigen processing to generate class I binding peptides. This chain is Proteasome subunit beta type-9 (Psmb9), found in Mus platythrix (Flat-haired mouse).